Here is a 453-residue protein sequence, read N- to C-terminus: Ribosomal protein uS12 methylthiotransferase RimO (453 aa).

One can recognise an MTTase N-terminal domain in the interval 5 to 120 (PKVGFVSLGC…VMQAVHSHLP (116 aa)). The [4Fe-4S] cluster site is built by C14, C50, C79, C151, C155, and C158. The Radical SAM core domain maps to 137–382 (LTPRHYAYLK…MEVAEEVSAN (246 aa)). Positions 385–453 (QRKVGKTLKV…ADGHDLWGEV (69 aa)) constitute a TRAM domain.

It belongs to the methylthiotransferase family. RimO subfamily. [4Fe-4S] cluster is required as a cofactor.

The protein resides in the cytoplasm. It carries out the reaction L-aspartate(89)-[ribosomal protein uS12]-hydrogen + (sulfur carrier)-SH + AH2 + 2 S-adenosyl-L-methionine = 3-methylsulfanyl-L-aspartate(89)-[ribosomal protein uS12]-hydrogen + (sulfur carrier)-H + 5'-deoxyadenosine + L-methionine + A + S-adenosyl-L-homocysteine + 2 H(+). Catalyzes the methylthiolation of an aspartic acid residue of ribosomal protein uS12. The protein is Ribosomal protein uS12 methylthiotransferase RimO of Burkholderia lata (strain ATCC 17760 / DSM 23089 / LMG 22485 / NCIMB 9086 / R18194 / 383).